We begin with the raw amino-acid sequence, 716 residues long: Amino-acid acetyltransferase, mitochondrial (716 aa).

A mitochondrion-targeting transit peptide spans 1-44 (MSPHTGWPRTVNSSLLKKHRSSLCTCQHTSSFLPRSFSTTADRH). Disordered stretches follow at residues 99–119 (YPKSPDENKPEPEKLATAPTL) and 487–508 (LSSSLPMSRRGPTNNGQGTVYP). Residues 102 to 112 (SPDENKPEPEK) are compositionally biased toward basic and acidic residues. Residues 497–508 (GPTNNGQGTVYP) show a composition bias toward polar residues. In terms of domain architecture, N-acetyltransferase spans 537–706 (SRPRLKLDDP…YEAVCRSTQP (170 aa)).

This sequence belongs to the acetyltransferase family.

Its subcellular location is the mitochondrion. The catalysed reaction is L-glutamate + acetyl-CoA = N-acetyl-L-glutamate + CoA + H(+). It participates in amino-acid biosynthesis; L-arginine biosynthesis; N(2)-acetyl-L-ornithine from L-glutamate: step 1/4. In terms of biological role, N-acetylglutamate synthase involved in arginine biosynthesis. This chain is Amino-acid acetyltransferase, mitochondrial (arg2), found in Neosartorya fischeri (strain ATCC 1020 / DSM 3700 / CBS 544.65 / FGSC A1164 / JCM 1740 / NRRL 181 / WB 181) (Aspergillus fischerianus).